The primary structure comprises 131 residues: Holo-[acyl-carrier-protein] synthase (131 aa).

Residues D8 and E59 each coordinate Mg(2+).

Belongs to the P-Pant transferase superfamily. AcpS family. Requires Mg(2+) as cofactor.

It localises to the cytoplasm. The catalysed reaction is apo-[ACP] + CoA = holo-[ACP] + adenosine 3',5'-bisphosphate + H(+). In terms of biological role, transfers the 4'-phosphopantetheine moiety from coenzyme A to a Ser of acyl-carrier-protein. The protein is Holo-[acyl-carrier-protein] synthase of Rickettsia africae (strain ESF-5).